The chain runs to 76 residues: ATP synthase subunit c (76 aa).

2 consecutive transmembrane segments (helical) span residues 12-32 and 54-74; these read LGSI…GIIF and ILGF…PFVY.

This sequence belongs to the ATPase C chain family. F-type ATPases have 2 components, F(1) - the catalytic core - and F(0) - the membrane proton channel. F(1) has five subunits: alpha(3), beta(3), gamma(1), delta(1), epsilon(1). F(0) has three main subunits: a(1), b(2) and c(10-14). The alpha and beta chains form an alternating ring which encloses part of the gamma chain. F(1) is attached to F(0) by a central stalk formed by the gamma and epsilon chains, while a peripheral stalk is formed by the delta and b chains.

It localises to the cell membrane. Its function is as follows. F(1)F(0) ATP synthase produces ATP from ADP in the presence of a proton or sodium gradient. F-type ATPases consist of two structural domains, F(1) containing the extramembraneous catalytic core and F(0) containing the membrane proton channel, linked together by a central stalk and a peripheral stalk. During catalysis, ATP synthesis in the catalytic domain of F(1) is coupled via a rotary mechanism of the central stalk subunits to proton translocation. In terms of biological role, key component of the F(0) channel; it plays a direct role in translocation across the membrane. A homomeric c-ring of between 10-14 subunits forms the central stalk rotor element with the F(1) delta and epsilon subunits. This is ATP synthase subunit c from Streptomyces coelicolor (strain ATCC BAA-471 / A3(2) / M145).